We begin with the raw amino-acid sequence, 104 residues long: Protein MGF 300-3L (104 aa).

Belongs to the asfivirus MGF 300 family.

Functionally, plays a role in virus cell tropism, and may be required for efficient virus replication in macrophages. This is Protein MGF 300-3L from African swine fever virus (isolate Tick/Malawi/Lil 20-1/1983) (ASFV).